Here is a 205-residue protein sequence, read N- to C-terminus: D-alanine--D-alanine ligase (205 aa).

In terms of domain architecture, ATP-grasp spans 111–205 (KHVLKSLGID…LGRAIGTMEF (95 aa)). 139-190 (MPYPFVIKPICGGSTIGVHAIFSRSEYLDLSVHADALEGRMLVEEYIPGQEV) is an ATP binding site.

This sequence belongs to the D-alanine--D-alanine ligase family. It depends on Mg(2+) as a cofactor. Requires Mn(2+) as cofactor.

The protein localises to the cytoplasm. It catalyses the reaction 2 D-alanine + ATP = D-alanyl-D-alanine + ADP + phosphate + H(+). The protein operates within cell wall biogenesis; peptidoglycan biosynthesis. In terms of biological role, cell wall formation. The polypeptide is D-alanine--D-alanine ligase (ddl) (Anaplasma centrale).